Here is a 278-residue protein sequence, read N- to C-terminus: Pantothenate synthetase (278 aa).

ATP is bound at residue 31-38 (MGALHEGH). His-38 (proton donor) is an active-site residue. Position 62 (Gln-62) interacts with (R)-pantoate. Position 62 (Gln-62) interacts with beta-alanine. Residue 148–151 (GEKD) coordinates ATP. Residue Gln-154 participates in (R)-pantoate binding. Residues Leu-177 and 185–188 (MSSR) each bind ATP.

Belongs to the pantothenate synthetase family. Homodimer.

It localises to the cytoplasm. It catalyses the reaction (R)-pantoate + beta-alanine + ATP = (R)-pantothenate + AMP + diphosphate + H(+). It functions in the pathway cofactor biosynthesis; (R)-pantothenate biosynthesis; (R)-pantothenate from (R)-pantoate and beta-alanine: step 1/1. Functionally, catalyzes the condensation of pantoate with beta-alanine in an ATP-dependent reaction via a pantoyl-adenylate intermediate. The chain is Pantothenate synthetase from Acidiphilium cryptum (strain JF-5).